Reading from the N-terminus, the 137-residue chain is Phosphoribosyl-AMP cyclohydrolase (137 aa).

Asp84 serves as a coordination point for Mg(2+). A Zn(2+)-binding site is contributed by Cys85. Mg(2+)-binding residues include Asp86 and Asp88. Zn(2+) contacts are provided by Cys101 and Cys108.

Belongs to the PRA-CH family. Homodimer. It depends on Mg(2+) as a cofactor. Zn(2+) is required as a cofactor.

Its subcellular location is the cytoplasm. The catalysed reaction is 1-(5-phospho-beta-D-ribosyl)-5'-AMP + H2O = 1-(5-phospho-beta-D-ribosyl)-5-[(5-phospho-beta-D-ribosylamino)methylideneamino]imidazole-4-carboxamide. The protein operates within amino-acid biosynthesis; L-histidine biosynthesis; L-histidine from 5-phospho-alpha-D-ribose 1-diphosphate: step 3/9. In terms of biological role, catalyzes the hydrolysis of the adenine ring of phosphoribosyl-AMP. In Chlorobium phaeovibrioides (strain DSM 265 / 1930) (Prosthecochloris vibrioformis (strain DSM 265)), this protein is Phosphoribosyl-AMP cyclohydrolase.